A 517-amino-acid polypeptide reads, in one-letter code: Bifunctional purine biosynthesis protein PurH (517 aa).

In terms of domain architecture, MGS-like spans 1–146 (MGRLVLLSVS…KNFAHLTVLC (146 aa)).

The protein belongs to the PurH family.

The catalysed reaction is (6R)-10-formyltetrahydrofolate + 5-amino-1-(5-phospho-beta-D-ribosyl)imidazole-4-carboxamide = 5-formamido-1-(5-phospho-D-ribosyl)imidazole-4-carboxamide + (6S)-5,6,7,8-tetrahydrofolate. It carries out the reaction IMP + H2O = 5-formamido-1-(5-phospho-D-ribosyl)imidazole-4-carboxamide. Its pathway is purine metabolism; IMP biosynthesis via de novo pathway; 5-formamido-1-(5-phospho-D-ribosyl)imidazole-4-carboxamide from 5-amino-1-(5-phospho-D-ribosyl)imidazole-4-carboxamide (10-formyl THF route): step 1/1. The protein operates within purine metabolism; IMP biosynthesis via de novo pathway; IMP from 5-formamido-1-(5-phospho-D-ribosyl)imidazole-4-carboxamide: step 1/1. The chain is Bifunctional purine biosynthesis protein PurH from Gloeothece citriformis (strain PCC 7424) (Cyanothece sp. (strain PCC 7424)).